Here is a 655-residue protein sequence, read N- to C-terminus: Phosphatidylinositol-3,5-bisphosphate 3-phosphatase MTMR6 (655 aa).

The region spanning M1–Q101 is the GRAM domain. The interval E2–N141 is interaction with RAB1B. A Phosphotyrosine modification is found at Y108. The Myotubularin phosphatase domain maps to G124–Y537. The a 1,2-diacyl-sn-glycero-3-phospho-(1D-myo-inositol-3,5-bisphosphate) site is built by N286, N311, and I312. A 1,2-diacyl-sn-glycero-3-phospho-(1D-myo-inositol-3-phosphate) contacts are provided by N286, N311, and I312. C374 acts as the Phosphocysteine intermediate in catalysis. A 1,2-diacyl-sn-glycero-3-phospho-(1D-myo-inositol-3,5-bisphosphate) contacts are provided by S375, D376, G377, W378, D379, R380, K416, and R420. S375, D376, G377, W378, D379, and R380 together coordinate a 1,2-diacyl-sn-glycero-3-phospho-(1D-myo-inositol-3-phosphate). Residue R420 coordinates a 1,2-diacyl-sn-glycero-3-phospho-(1D-myo-inositol-3-phosphate). Positions R547–G581 form a coiled coil. A phosphoserine mark is found at S595, S623, and S645.

This sequence belongs to the protein-tyrosine phosphatase family. Non-receptor class myotubularin subfamily. In terms of assembly, homodimer. Heterodimer (via C-terminus) with MTMR9 (via C-terminus). Interacts with ALKBH4. Interacts with KCNN4. Interacts (via GRAM domain) with RAB1B (in GDP-bound form); the interaction regulates MTMR6 recruitment to the endoplasmic reticulum-Golgi intermediate compartment.

It localises to the cytoplasm. The protein localises to the endoplasmic reticulum. Its subcellular location is the cell projection. The protein resides in the ruffle membrane. It is found in the endoplasmic reticulum-Golgi intermediate compartment. It localises to the perinuclear region. The catalysed reaction is a 1,2-diacyl-sn-glycero-3-phospho-(1D-myo-inositol-3,5-bisphosphate) + H2O = a 1,2-diacyl-sn-glycero-3-phospho-(1D-myo-inositol-5-phosphate) + phosphate. It catalyses the reaction a 1,2-diacyl-sn-glycero-3-phospho-(1D-myo-inositol-3-phosphate) + H2O = a 1,2-diacyl-sn-glycero-3-phospho-(1D-myo-inositol) + phosphate. It carries out the reaction 1,2-dioctanoyl-sn-glycero-3-phospho-(1D-myo-inositol-3,5-bisphosphate) + H2O = 1,2-dioctanoyl-sn-glycero-3-phospho-(1D-myo-inositol-5-phosphate) + phosphate. The enzyme catalyses 1,2-dioctanoyl-sn-glycero-3-phospho-(1-D-myo-inositol-3-phosphate) + H2O = 1,2-dioctanoyl-sn-glycero-3-phospho-(1D-myo-inositol) + phosphate. Its activity is regulated as follows. Allosterically activated by phosphatidylserine and/or phosphatidylinositol 4-phosphate (PtdIns(4)P), and phosphatidylinositol 5-phosphate (PtdIns(5)P). Interaction with MTMR9 increases catalytic activity towards phosphatidylinositol 3,5-bisphosphate. Lipid phosphatase that specifically dephosphorylates the D-3 position of phosphatidylinositol 3-phosphate and phosphatidylinositol 3,5-bisphosphate, generating phosphatidylinositol and phosphatidylinositol 5-phosphate. Binds with high affinity to phosphatidylinositol 3,5-bisphosphate (PtdIns(3,5)P2) but also to phosphatidylinositol 3-phosphate (PtdIns(3)P), phosphatidylinositol 4-phosphate (PtdIns(4)P), and phosphatidylinositol 5-phosphate (PtdIns(5)P), phosphatidic acid and phosphatidylserine. Negatively regulates ER-Golgi protein transport. Probably in association with MTMR9, plays a role in the late stages of macropinocytosis by dephosphorylating phosphatidylinositol 3-phosphate in membrane ruffles. Acts as a negative regulator of KCNN4/KCa3.1 channel activity in CD4(+) T-cells possibly by decreasing intracellular levels of phosphatidylinositol 3-phosphate. Negatively regulates proliferation of reactivated CD4(+) T-cells. In complex with MTMR9, negatively regulates DNA damage-induced apoptosis. The formation of the MTMR6-MTMR9 complex stabilizes both MTMR6 and MTMR9 protein levels. This is Phosphatidylinositol-3,5-bisphosphate 3-phosphatase MTMR6 from Rattus norvegicus (Rat).